Here is a 931-residue protein sequence, read N- to C-terminus: Semaphorin-6C (931 aa).

The signal sequence occupies residues 1 to 25 (MPRAPHSMPLLLLLLLLSSLPQAQA). Residues 26–605 (AFPQDPTPLL…ASASRSIPIP (580 aa)) lie on the Extracellular side of the membrane. In terms of domain architecture, Sema spans 31-517 (PTPLLTSDLQ…FPGCIVYLSL (487 aa)). N-linked (GlcNAc...) asparagine glycosylation occurs at N71. 4 disulfide bridges follow: C112/C122, C140/C149, C263/C374, and C288/C333. The N-linked (GlcNAc...) asparagine glycan is linked to N287. N438 carries N-linked (GlcNAc...) asparagine glycosylation. 4 cysteine pairs are disulfide-bonded: C480/C511, C520/C538, C526/C571, and C530/C546. The tract at residues 556–591 (DVDLTGNQESTEHGDCQDGATGSQSGPGDSAYGVRR) is disordered. A helical membrane pass occupies residues 606 to 626 (LLLACVAAAFALGASVSGLLV). Over 627 to 931 (SCACRRANRR…PAPHGGHFNF (305 aa)) the chain is Cytoplasmic. 2 disordered regions span residues 655–747 (LARL…GGPA) and 777–931 (HGPQ…HFNF). Residues 693–708 (PPELACLPTPETTPEL) are compositionally biased toward low complexity. Positions 893 to 906 (PEGHRGRSLKRVDV) are enriched in basic and acidic residues. The segment covering 911–923 (SPKPPLASPPQPA) has biased composition (pro residues).

This sequence belongs to the semaphorin family.

It localises to the cell membrane. In terms of biological role, may be a stop signal for the dorsal root ganglion neurons in their target areas, and possibly also for other neurons. May also be involved in the maintenance and remodeling of neuronal connections. The polypeptide is Semaphorin-6C (Sema6c) (Mus musculus (Mouse)).